Here is a 212-residue protein sequence, read N- to C-terminus: Imidazole glycerol phosphate synthase subunit HisH (212 aa).

The region spanning 3 to 212 (TVAVIDYGMG…QNFAAWDGRW (210 aa)) is the Glutamine amidotransferase type-1 domain. Cys81 acts as the Nucleophile in catalysis. Residues His190 and Glu192 contribute to the active site.

As to quaternary structure, heterodimer of HisH and HisF.

The protein localises to the cytoplasm. It carries out the reaction 5-[(5-phospho-1-deoxy-D-ribulos-1-ylimino)methylamino]-1-(5-phospho-beta-D-ribosyl)imidazole-4-carboxamide + L-glutamine = D-erythro-1-(imidazol-4-yl)glycerol 3-phosphate + 5-amino-1-(5-phospho-beta-D-ribosyl)imidazole-4-carboxamide + L-glutamate + H(+). It catalyses the reaction L-glutamine + H2O = L-glutamate + NH4(+). It participates in amino-acid biosynthesis; L-histidine biosynthesis; L-histidine from 5-phospho-alpha-D-ribose 1-diphosphate: step 5/9. Its function is as follows. IGPS catalyzes the conversion of PRFAR and glutamine to IGP, AICAR and glutamate. The HisH subunit catalyzes the hydrolysis of glutamine to glutamate and ammonia as part of the synthesis of IGP and AICAR. The resulting ammonia molecule is channeled to the active site of HisF. In Pseudomonas savastanoi pv. phaseolicola (strain 1448A / Race 6) (Pseudomonas syringae pv. phaseolicola (strain 1448A / Race 6)), this protein is Imidazole glycerol phosphate synthase subunit HisH.